Consider the following 586-residue polypeptide: 2-succinyl-5-enolpyruvyl-6-hydroxy-3-cyclohexene-1-carboxylate synthase (586 aa).

This sequence belongs to the TPP enzyme family. MenD subfamily. Homodimer. Mg(2+) is required as a cofactor. Requires Mn(2+) as cofactor. Thiamine diphosphate serves as cofactor.

It carries out the reaction isochorismate + 2-oxoglutarate + H(+) = 5-enolpyruvoyl-6-hydroxy-2-succinyl-cyclohex-3-ene-1-carboxylate + CO2. It participates in quinol/quinone metabolism; 1,4-dihydroxy-2-naphthoate biosynthesis; 1,4-dihydroxy-2-naphthoate from chorismate: step 2/7. Its pathway is cofactor biosynthesis; phylloquinone biosynthesis. Catalyzes the thiamine diphosphate-dependent decarboxylation of 2-oxoglutarate and the subsequent addition of the resulting succinic semialdehyde-thiamine pyrophosphate anion to isochorismate to yield 2-succinyl-5-enolpyruvyl-6-hydroxy-3-cyclohexene-1-carboxylate (SEPHCHC). This is 2-succinyl-5-enolpyruvyl-6-hydroxy-3-cyclohexene-1-carboxylate synthase from Acaryochloris marina (strain MBIC 11017).